A 156-amino-acid chain; its full sequence is Small ribosomal subunit protein uS7 (156 aa).

It belongs to the universal ribosomal protein uS7 family. Part of the 30S ribosomal subunit. Contacts proteins S9 and S11.

Its function is as follows. One of the primary rRNA binding proteins, it binds directly to 16S rRNA where it nucleates assembly of the head domain of the 30S subunit. Is located at the subunit interface close to the decoding center, probably blocks exit of the E-site tRNA. This is Small ribosomal subunit protein uS7 from Edwardsiella ictaluri (strain 93-146).